The following is a 359-amino-acid chain: Acidic skeletal organic matrix protein (359 aa).

Residues 1–26 (MLAPRLAFVLLLSSYFGSILITSVES) form the signal peptide. Disordered regions lie at residues 60-83 (FEEDDDDDDDEDNEESENEVEDFD) and 224-254 (SEAEDPEEVDDAKRAETGKDPICVDPDDPNE). Residues 66–89 (DDDDEDNEESENEVEDFDDENALS) are a coiled coil.

Component of the acid-insoluble and acid-soluble organic matrix of the aragonitic skeleton (at protein level).

The protein localises to the secreted. The chain is Acidic skeletal organic matrix protein from Acropora millepora (Staghorn coral).